We begin with the raw amino-acid sequence, 35 residues long: Dermonecrotic toxin LgSicTox-beta-LOXN4 (35 aa).

A Mg(2+)-binding site is contributed by D20.

Belongs to the arthropod phospholipase D family. Class II subfamily. The cofactor is Mg(2+). Post-translationally, contains 2 disulfide bonds. As to expression, expressed by the venom gland.

It is found in the secreted. The enzyme catalyses an N-(acyl)-sphingosylphosphocholine = an N-(acyl)-sphingosyl-1,3-cyclic phosphate + choline. It carries out the reaction an N-(acyl)-sphingosylphosphoethanolamine = an N-(acyl)-sphingosyl-1,3-cyclic phosphate + ethanolamine. The catalysed reaction is a 1-acyl-sn-glycero-3-phosphocholine = a 1-acyl-sn-glycero-2,3-cyclic phosphate + choline. It catalyses the reaction a 1-acyl-sn-glycero-3-phosphoethanolamine = a 1-acyl-sn-glycero-2,3-cyclic phosphate + ethanolamine. Dermonecrotic toxins cleave the phosphodiester linkage between the phosphate and headgroup of certain phospholipids (sphingolipid and lysolipid substrates), forming an alcohol (often choline) and a cyclic phosphate. This toxin acts on sphingomyelin (SM). It may also act on ceramide phosphoethanolamine (CPE), lysophosphatidylcholine (LPC) and lysophosphatidylethanolamine (LPE), but not on lysophosphatidylserine (LPS), and lysophosphatidylglycerol (LPG). It acts by transphosphatidylation, releasing exclusively cyclic phosphate products as second products. Induces dermonecrosis, hemolysis, increased vascular permeability, edema, inflammatory response, and platelet aggregation. This chain is Dermonecrotic toxin LgSicTox-beta-LOXN4, found in Loxosceles gaucho (Spider).